The chain runs to 369 residues: Tetratricopeptide repeat protein 19 homolog, mitochondrial (369 aa).

TPR repeat units lie at residues 97–130 (LIKT…AQDI), 137–170 (TYVF…LFAE), 228–261 (GLTK…LINV), 270–303 (VTIL…TKEL), and 310–343 (GILQ…GKQH).

The protein belongs to the TTC19 family.

The protein resides in the mitochondrion. In terms of biological role, required for mitochondrial complex III formation. The sequence is that of Tetratricopeptide repeat protein 19 homolog, mitochondrial (Ttc19) from Drosophila melanogaster (Fruit fly).